The following is a 521-amino-acid chain: Probable cytochrome P450 12d1 distal, mitochondrial (521 aa).

Residues 1 to 19 (MNTLSSARSVAIYVGPVRS) constitute a mitochondrion transit peptide. Cysteine 467 provides a ligand contact to heme.

Belongs to the cytochrome P450 family. Heme is required as a cofactor.

The protein resides in the mitochondrion membrane. In Drosophila melanogaster (Fruit fly), this protein is Probable cytochrome P450 12d1 distal, mitochondrial.